A 332-amino-acid polypeptide reads, in one-letter code: Large ribosomal subunit protein uL10 (332 aa).

Residues 294–332 (QAAAAPVAVEDNTEEPEEEEEEEEDAAESAAAGLGALFG) are disordered. Acidic residues predominate over residues 304 to 320 (DNTEEPEEEEEEEEDAA).

It belongs to the universal ribosomal protein uL10 family. As to quaternary structure, part of the 50S ribosomal subunit. Forms part of the ribosomal stalk which helps the ribosome interact with GTP-bound translation factors. Forms a heptameric L10(L12)2(L12)2(L12)2 complex, where L10 forms an elongated spine to which the L12 dimers bind in a sequential fashion.

Forms part of the ribosomal stalk, playing a central role in the interaction of the ribosome with GTP-bound translation factors. This chain is Large ribosomal subunit protein uL10, found in Methanosphaera stadtmanae (strain ATCC 43021 / DSM 3091 / JCM 11832 / MCB-3).